Consider the following 465-residue polypeptide: Cysteine--tRNA ligase (465 aa).

Cys30 contacts Zn(2+). A 'HIGH' region motif is present at residues 32–42 (PTVYDRAHLGN). Zn(2+)-binding residues include Cys213, His238, and Glu242. A 'KMSKS' region motif is present at residues 271–275 (KMSKS). Position 274 (Lys274) interacts with ATP.

The protein belongs to the class-I aminoacyl-tRNA synthetase family. In terms of assembly, monomer. It depends on Zn(2+) as a cofactor.

It localises to the cytoplasm. It catalyses the reaction tRNA(Cys) + L-cysteine + ATP = L-cysteinyl-tRNA(Cys) + AMP + diphosphate. This chain is Cysteine--tRNA ligase, found in Ruegeria pomeroyi (strain ATCC 700808 / DSM 15171 / DSS-3) (Silicibacter pomeroyi).